The chain runs to 88 residues: Small ribosomal subunit protein bS16 (88 aa).

This sequence belongs to the bacterial ribosomal protein bS16 family.

In Geobacter sp. (strain M21), this protein is Small ribosomal subunit protein bS16.